Reading from the N-terminus, the 277-residue chain is Large ribosomal subunit protein uL2 (277 aa).

The interval 219–277 (TVRGSVMNPNDHPHGGGEGKAPVGRKAPSTPWGKPALGLKTRNKKAKSDKLIVRRRNEK) is disordered. Positions 264 to 277 (AKSDKLIVRRRNEK) are enriched in basic and acidic residues.

This sequence belongs to the universal ribosomal protein uL2 family. As to quaternary structure, part of the 50S ribosomal subunit. Forms a bridge to the 30S subunit in the 70S ribosome.

One of the primary rRNA binding proteins. Required for association of the 30S and 50S subunits to form the 70S ribosome, for tRNA binding and peptide bond formation. It has been suggested to have peptidyltransferase activity; this is somewhat controversial. Makes several contacts with the 16S rRNA in the 70S ribosome. This is Large ribosomal subunit protein uL2 from Streptococcus gordonii (strain Challis / ATCC 35105 / BCRC 15272 / CH1 / DL1 / V288).